The following is a 165-amino-acid chain: Large ribosomal subunit protein uL10 (165 aa).

The protein belongs to the universal ribosomal protein uL10 family. In terms of assembly, part of the ribosomal stalk of the 50S ribosomal subunit. The N-terminus interacts with L11 and the large rRNA to form the base of the stalk. The C-terminus forms an elongated spine to which L12 dimers bind in a sequential fashion forming a multimeric L10(L12)X complex.

Functionally, forms part of the ribosomal stalk, playing a central role in the interaction of the ribosome with GTP-bound translation factors. This Pectobacterium carotovorum subsp. carotovorum (strain PC1) protein is Large ribosomal subunit protein uL10.